A 337-amino-acid chain; its full sequence is DNA-directed RNA polymerase subunit alpha (337 aa).

An alpha N-terminal domain (alpha-NTD) region spans residues 1–233 (MVREEVVGST…DLFIPFLHAE (233 aa)). The tract at residues 265–337 (KEIALKCIFI…FAIDLPKNKF (73 aa)) is alpha C-terminal domain (alpha-CTD).

This sequence belongs to the RNA polymerase alpha chain family. In plastids the minimal PEP RNA polymerase catalytic core is composed of four subunits: alpha, beta, beta', and beta''. When a (nuclear-encoded) sigma factor is associated with the core the holoenzyme is formed, which can initiate transcription.

It localises to the plastid. The protein localises to the chloroplast. The enzyme catalyses RNA(n) + a ribonucleoside 5'-triphosphate = RNA(n+1) + diphosphate. Functionally, DNA-dependent RNA polymerase catalyzes the transcription of DNA into RNA using the four ribonucleoside triphosphates as substrates. This Acorus calamus (Sweet flag) protein is DNA-directed RNA polymerase subunit alpha.